A 34-amino-acid polypeptide reads, in one-letter code: MSDIN-like toxin proprotein 12 (34 aa).

Positions 1–10 are excised as a propeptide; it reads MSDINATRLP. The segment at residues 11–19 is a cross-link (cyclopeptide (His-Pro)); it reads HPFPLGLQP. A propeptide spanning residues 20–34 is cleaved from the precursor; sequence CAGDVDNLTLTKGEG.

Belongs to the MSDIN fungal toxin family. Post-translationally, processed by the macrocyclase-peptidase enzyme POPB to yield a toxic cyclic nonapeptide. POPB first removes 10 residues from the N-terminus. Conformational trapping of the remaining peptide forces the enzyme to release this intermediate rather than proceed to macrocyclization. The enzyme rebinds the remaining peptide in a different conformation and catalyzes macrocyclization of the N-terminal 9 residues.

Its function is as follows. Probable toxin that belongs to the MSDIN-like toxin family responsible for a large number of food poisoning cases and deaths. This Amanita bisporigera (Destroying angel) protein is MSDIN-like toxin proprotein 12.